Reading from the N-terminus, the 334-residue chain is Inositol 2-dehydrogenase (334 aa).

This sequence belongs to the Gfo/Idh/MocA family. Homotetramer.

The enzyme catalyses myo-inositol + NAD(+) = scyllo-inosose + NADH + H(+). Its function is as follows. Involved in the oxidation of myo-inositol (MI) to 2-keto-myo-inositol (2KMI or 2-inosose). The chain is Inositol 2-dehydrogenase from Cereibacter sphaeroides (strain ATCC 17029 / ATH 2.4.9) (Rhodobacter sphaeroides).